A 141-amino-acid polypeptide reads, in one-letter code: DUF35 domain-containing scaffold protein (141 aa).

Zn(2+) contacts are provided by Cys30, Cys33, Cys44, and Cys47.

Belongs to the scaffold protein DUF35 family. As to quaternary structure, interacts with acetoacetyl-CoA thiolase and HMG-CoA synthase (HMGCS) that catalyzes the first and second step in the mevalonate pathway, respectively.

In terms of biological role, functions as a scaffold to connect the acetoacetyl-CoA thiolase and HMG-CoA synthase (HMGCS) dimers in the channeling thiolase/HMGCS complex, which allows for efficient coupling of the endergonic thiolase reaction with the exergonic HMGCS reaction. This Methanocaldococcus jannaschii (strain ATCC 43067 / DSM 2661 / JAL-1 / JCM 10045 / NBRC 100440) (Methanococcus jannaschii) protein is DUF35 domain-containing scaffold protein.